The following is a 372-amino-acid chain: Cyclin-dependent kinase 9 (372 aa).

The 297-residue stretch at 19–315 (YEKLAKIGQG…SDDALNHDFF (297 aa)) folds into the Protein kinase domain. 25–33 (IGQGTFGEV) provides a ligand contact to ATP. Lys35 is subject to Phosphoserine. Lys44 carries the post-translational modification N6-acetyllysine; by EP300/CBP, PCAF/KAT2B and GCN5/KAT2A. Residue Lys48 participates in ATP binding. The residue at position 48 (Lys48) is an N6-acetyllysine; by PCAF/KAT2B and GCN5/KAT2A. Phosphothreonine is present on Asn54. 104-106 (DFC) contacts ATP. The Proton acceptor role is filled by Asp149. The T-loop stretch occupies residues 166–191 (ADFGLARAFSLAKNSQPNRYTNRVVT). Asp167 is a binding site for ATP. At Ser175 the chain carries Phosphoserine. A Phosphothreonine; by CaMK1D modification is found at Thr186. Positions 343 to 372 (RRKGSQITQQSTNQSRNPATTNQTEFERVF) are disordered. Ser347 bears the Phosphoserine; by CDK9 and PKA mark. Over residues 347–366 (SQITQQSTNQSRNPATTNQT) the composition is skewed to polar residues. Thr350 bears the Phosphothreonine; by CDK9 mark. A Phosphoserine; by CDK9 modification is found at Ser353. Position 354 is a phosphothreonine; by CDK9 (Thr354). A Phosphoserine; by CDK9 modification is found at Ser357. A phosphothreonine; by CDK9 mark is found at Thr362 and Thr363.

This sequence belongs to the protein kinase superfamily. CMGC Ser/Thr protein kinase family. CDC2/CDKX subfamily. Component of the super elongation complex (SEC), at least composed of EAF1, EAF2, CDK9, MLLT3/AF9, AFF (AFF1 or AFF4), the P-TEFb complex and ELL (ELL, ELL2 or ELL3). Associates with CCNT1/cyclin-T1, CCNT2/cyclin-T2 (isoform A and isoform B) or CCNK/cyclin-K to form active P-TEFb. P-TEFb forms a complex with AFF4/AF5Q31 and is part of the super elongation complex (SEC). Component of a complex which is composed of at least 5 members: HTATSF1/Tat-SF1, P-TEFb complex, RNA pol II, SUPT5H and NCL/nucleolin. Associates with UBR5 and forms a transcription regulatory complex composed of CDK9, RNAP II, UBR5 and TFIIS/TCEA1 that can stimulate target gene transcription (e.g. gamma fibrinogen/FGG) by recruiting their promoters. Component of the 7SK snRNP inactive complex which is composed of at least 8 members: P-TEFb (composed of CDK9 and CCNT1/cyclin-T1), HEXIM1, HEXIM2, LARP7, BCDIN3, SART3 proteins and 7SK and U6 snRNAs. This inactive 7SK snRNP complex can also interact with NCOR1 and HDAC3, probably to regulate CDK9 acetylation. Release of P-TEFb from P-TEFb/7SK snRNP complex requires both PP2B to transduce calcium Ca(2+) signaling in response to stimuli (e.g. UV or hexamethylene bisacetamide (HMBA)) and PPP1CA to dephosphorylate Thr-186. This released P-TEFb remains inactive in the pre-initiation complex with BRD4 until new Thr-186 phosphorylation occurs after the synthesis of a short RNA. Interacts with BRD4; to target chromatin binding. Interacts with JMJD6. Interacts with activated nuclear STAT3 and RELA/p65. Binds to AR and MYOD1. Forms a complex composed of CDK9, CCNT1/cyclin-T1, EP300 and GATA4 that stimulates hypertrophy in cardiomyocytes. The large PER complex involved in the repression of transcriptional termination is composed of at least PER2, CDK9, DDX5, DHX9, NCBP1 and POLR2A. Interacts with HSF1. Interacts with TBX21. Isoform 3: binds to KU70/XRCC6. Interacts with WDR43. Interacts with ZMYND8; the association appears to occur between homodimeric ZMYND8 and the activated form of the P-TEFb complex. In terms of assembly, (Microbial infection) Interacts with the acidic/proline-rich region of HIV-1 and HIV-2 Tat via T-loop region and is thus required for HIV to hijack host transcription machinery during its replication through cooperative binding to viral TAR RNA. As to quaternary structure, (Microbial infection) Interacts with human herpes virus 1 (HHV-1) protein ICP22; this interaction blocks the recruitment of positive transcription elongation factor b (P-TEFb) to the viral promoter. Autophosphorylation at Thr-186, Ser-347, Thr-350, Ser-353, Thr-354 and Ser-357 triggers kinase activity by promoting cyclin and substrate binding (e.g. HIV TAT) upon conformational changes. Thr-186 phosphorylation requires the calcium Ca(2+) signaling pathway, including CaMK1D and calmodulin. This inhibition is relieved by Thr-29 dephosphorylation. However, phosphorylation at Thr-29 is inhibitory within the HIV transcription initiation complex. Phosphorylation at Ser-175 inhibits kinase activity. Can be phosphorylated on either Thr-362 or Thr-363 but not on both simultaneously. In terms of processing, dephosphorylation of Thr-186 by PPM1A and PPM1B blocks CDK9 activity and may lead to CDK9 proteasomal degradation. However, PPP1CA-mediated Thr-186 dephosphorylation is required to release P-TEFb from its inactive P-TEFb/7SK snRNP complex. Dephosphorylated at Ser-347 by the PNUTS-PP1 complex during RNA polymerase II transcription pause-release. Dephosphorylation of C-terminus Thr and Ser residues by protein phosphatase-1 (PP1) triggers CDK9 activity, contributing to the activation of HIV-1 transcription. Post-translationally, N6-acetylation of Lys-44 promotes kinase activity, whereas acetylation of both Lys-44 and Lys-48 mediated by PCAF/KAT2B and GCN5/KAT2A reduces kinase activity. The acetylated form associates with PML bodies in the nuclear matrix and with the transcriptionally silent HIV-1 genome; deacetylated upon transcription stimulation. Deacetylated by SIRT7, promoting the kinase activity and subsequent 'Ser-2' phosphorylation of the C-terminal domain (CTD) of RNA polymerase II. Polyubiquitinated and thus activated by UBR5. This ubiquitination is promoted by TFIIS/TCEA1 and favors 'Ser-2' phosphorylation of RPB1/POLR2A CTD. In terms of tissue distribution, ubiquitous.

It localises to the nucleus. It is found in the cytoplasm. Its subcellular location is the PML body. The enzyme catalyses L-seryl-[protein] + ATP = O-phospho-L-seryl-[protein] + ADP + H(+). It carries out the reaction L-threonyl-[protein] + ATP = O-phospho-L-threonyl-[protein] + ADP + H(+). The catalysed reaction is [DNA-directed RNA polymerase] + ATP = phospho-[DNA-directed RNA polymerase] + ADP + H(+). Inhibited by CDKI-71, CR8, GPC-286199, AG-024322, flavopiridol (alvocidib), RBG-286147, anilinopyrimidine 32, arylazopyrazole 31b, indirubin 3'-monoxime, meriolin 3,P276-00, olomoucine II, pyrazolotriazine, meriolin, variolin, thiazolyl-pyrimidine, thiazolyl-pyrimidine, indirubin-30-monoxime, ZK 304709, AG-012986, AT7519, R547, RGB-286638, imidazole pyrimidine, EXEL-3700, EXEL-8647, 5,6-dichloro-1-b-ribofur-anosyl-benzimidazole (DRB), P276-00, roscovitine (seliciclib, CYC202) and SNS-032 (BMS-387032). Activation by Thr-186 phosphorylation is calcium Ca(2+) signaling pathway-dependent; actively inactivated by dephosphorylation mediated by PPP1CA, PPM1A and PPM1B. Reversibly repressed by acetylation at Lys-44 and Lys-48. Functionally, protein kinase involved in the regulation of transcription. Member of the cyclin-dependent kinase pair (CDK9/cyclin-T) complex, also called positive transcription elongation factor b (P-TEFb), which facilitates the transition from abortive to productive elongation by phosphorylating the CTD (C-terminal domain) of the large subunit of RNA polymerase II (RNAP II) POLR2A, SUPT5H and RDBP. This complex is inactive when in the 7SK snRNP complex form. Phosphorylates EP300, MYOD1, RPB1/POLR2A and AR and the negative elongation factors DSIF and NELFE. Regulates cytokine inducible transcription networks by facilitating promoter recognition of target transcription factors (e.g. TNF-inducible RELA/p65 activation and IL-6-inducible STAT3 signaling). Promotes RNA synthesis in genetic programs for cell growth, differentiation and viral pathogenesis. P-TEFb is also involved in cotranscriptional histone modification, mRNA processing and mRNA export. Modulates a complex network of chromatin modifications including histone H2B monoubiquitination (H2Bub1), H3 lysine 4 trimethylation (H3K4me3) and H3K36me3; integrates phosphorylation during transcription with chromatin modifications to control co-transcriptional histone mRNA processing. The CDK9/cyclin-K complex has also a kinase activity towards CTD of RNAP II and can substitute for CDK9/cyclin-T P-TEFb in vitro. Replication stress response protein; the CDK9/cyclin-K complex is required for genome integrity maintenance, by promoting cell cycle recovery from replication arrest and limiting single-stranded DNA amount in response to replication stress, thus reducing the breakdown of stalled replication forks and avoiding DNA damage. In addition, probable function in DNA repair of isoform 2 via interaction with KU70/XRCC6. Promotes cardiac myocyte enlargement. RPB1/POLR2A phosphorylation on 'Ser-2' in CTD activates transcription. AR phosphorylation modulates AR transcription factor promoter selectivity and cell growth. DSIF and NELF phosphorylation promotes transcription by inhibiting their negative effect. The phosphorylation of MYOD1 enhances its transcriptional activity and thus promotes muscle differentiation. Catalyzes phosphorylation of KAT5, promoting KAT5 recruitment to chromatin and histone acetyltransferase activity. In Homo sapiens (Human), this protein is Cyclin-dependent kinase 9.